The chain runs to 500 residues: Sodium/potassium/calcium exchanger 5 (500 aa).

The first 29 residues, 1–29, serve as a signal peptide directing secretion; the sequence is MQTKGGQTWARRALLLGILWATAHLPLSG. Over 30–66 the chain is Extracellular; the sequence is TSLPQRLPRATGNSTQCVISPSSEFPEGFFTRQERRD. A helical membrane pass occupies residues 67–87; that stretch reads GGIIIYFLIIVYMFMAISIVC. At 88–111 the chain is on the cytoplasmic side; it reads DEYFLPSLEIISESLGLSQDVAGT. Residues 112–132 traverse the membrane as a helical segment; sequence TFMAAGSSAPELVTAFLGVFI. The Extracellular portion of the chain corresponds to 133-136; the sequence is TKGD. The chain crosses the membrane as a helical span at residues 137 to 157; that stretch reads IGISTILGSAIYNLLGICAAC. The Cytoplasmic segment spans residues 158 to 169; the sequence is GLLSNTVSTLSC. The helical transmembrane segment at 170 to 190 threads the bilayer; it reads WPLFRDCAAYTISAAAVLGII. Residues 191-195 are Extracellular-facing; it reads YDNQV. The helical transmembrane segment at 196-216 threads the bilayer; that stretch reads YWYEGALLLLIYGLYVLVLCF. At 217–302 the chain is on the cytoplasmic side; it reads DIKINQYIIK…PSVFNMPEAD (86 aa). Residues 303-323 traverse the membrane as a helical segment; sequence LKRIFWVLSLPIITLLFLTTP. Residues 324-333 are Extracellular-facing; it reads DCRKKFWKNY. Residues 334 to 354 traverse the membrane as a helical segment; it reads FVITFFMSAIWISAFTYILVW. The Cytoplasmic segment spans residues 355–368; it reads MVTITGETLEIPDT. Residues 369–389 form a helical membrane-spanning segment; sequence VMGLTLLAAGTSIPDTIASVL. Residues 390 to 399 are Extracellular-facing; sequence VARKGKGDMA. Residues 400 to 420 traverse the membrane as a helical segment; the sequence is MSNIVGSNVFDMLCLGIPWFI. The Cytoplasmic segment spans residues 421–437; that stretch reads KTAFINGSAPAEVNSRG. A helical membrane pass occupies residues 438-458; the sequence is LTYITISLNISIIFLFLAVHF. Residues 459–468 lie on the Extracellular side of the membrane; the sequence is NGWKLDRKLG. A helical membrane pass occupies residues 469–489; the sequence is IVCLLSYLGLATLSVLYELGI. Residues 490 to 500 lie on the Cytoplasmic side of the membrane; it reads IGNNKIRGCGG.

Belongs to the Ca(2+):cation antiporter (CaCA) (TC 2.A.19) family. SLC24A subfamily.

The protein localises to the golgi apparatus. It localises to the trans-Golgi network membrane. Its subcellular location is the melanosome. The enzyme catalyses Ca(2+)(out) + K(+)(out) + 4 Na(+)(in) = Ca(2+)(in) + K(+)(in) + 4 Na(+)(out). Functionally, calcium, potassium:sodium antiporter that transports 1 Ca(2+) and 1 K(+) to the melanosome in exchange for 4 cytoplasmic Na(+). Involved in pigmentation, possibly by participating in ion transport in melanosomes. Predominant sodium-calcium exchanger in melanocytes. The sequence is that of Sodium/potassium/calcium exchanger 5 from Homo sapiens (Human).